Consider the following 322-residue polypeptide: Tetrahydromethanopterin S-methyltransferase subunit H (322 aa).

It belongs to the MtrH family. As to quaternary structure, the complex is composed of 8 subunits; MtrA, MtrB, MtrC, MtrD, MtrE, MtrF, MtrG and MtrH.

The catalysed reaction is 5-methyl-5,6,7,8-tetrahydromethanopterin + coenzyme M + 2 Na(+)(in) = 5,6,7,8-tetrahydromethanopterin + methyl-coenzyme M + 2 Na(+)(out). Its pathway is one-carbon metabolism; methanogenesis from CO(2); methyl-coenzyme M from 5,10-methylene-5,6,7,8-tetrahydromethanopterin: step 2/2. Functionally, part of a complex that catalyzes the formation of methyl-coenzyme M and tetrahydromethanopterin from coenzyme M and methyl-tetrahydromethanopterin. This is an energy-conserving, sodium-ion translocating step. MtrH catalyzes the transfer of the methyl group from methyl-tetrahydromethanopterin to the corrinoid prosthetic group of MtrA. The polypeptide is Tetrahydromethanopterin S-methyltransferase subunit H (Methanopyrus kandleri (strain AV19 / DSM 6324 / JCM 9639 / NBRC 100938)).